A 270-amino-acid polypeptide reads, in one-letter code: Protein N-terminal and lysine N-methyltransferase EFM7 (270 aa).

Residues 1-45 are disordered; it reads MSDIESLNGGDLFAEPSDFYKPPPEPHFATYTRDDVPESSTSQQK. Residues Trp63, 89-91, Asp111, Trp158, and Ser182 contribute to the S-adenosyl-L-methionine site; that span reads GAA.

Belongs to the class I-like SAM-binding methyltransferase superfamily. EFM7 family.

It is found in the cytoplasm. Functionally, S-adenosyl-L-methionine-dependent protein methyltransferase that trimethylates the N-terminal glycine 'Gly-2' of elongation factor 1-alpha, before also catalyzing the mono- and dimethylation of 'Lys-3'. In Kluyveromyces lactis (strain ATCC 8585 / CBS 2359 / DSM 70799 / NBRC 1267 / NRRL Y-1140 / WM37) (Yeast), this protein is Protein N-terminal and lysine N-methyltransferase EFM7.